A 534-amino-acid polypeptide reads, in one-letter code: Glutamyl-tRNA(Gln) amidotransferase subunit B, mitochondrial (534 aa).

The N-terminal 28 residues, Met-1–Lys-28, are a transit peptide targeting the mitochondrion.

The protein belongs to the GatB/GatE family. GatB subfamily. As to quaternary structure, subunit of the heterotrimeric GatCAB amidotransferase (AdT) complex, composed of A, B and C subunits.

It localises to the mitochondrion. It carries out the reaction L-glutamyl-tRNA(Gln) + L-glutamine + ATP + H2O = L-glutaminyl-tRNA(Gln) + L-glutamate + ADP + phosphate + H(+). Its function is as follows. Allows the formation of correctly charged Gln-tRNA(Gln) through the transamidation of misacylated Glu-tRNA(Gln) in the mitochondria. The reaction takes place in the presence of glutamine and ATP through an activated gamma-phospho-Glu-tRNA(Gln). This chain is Glutamyl-tRNA(Gln) amidotransferase subunit B, mitochondrial, found in Laccaria bicolor (strain S238N-H82 / ATCC MYA-4686) (Bicoloured deceiver).